Reading from the N-terminus, the 516-residue chain is rRNA N(6)-adenosine-methyltransferase ZCCHC4 (516 aa).

8 residues coordinate Zn(2+): C40, H42, C66, C75, C127, C130, H142, and H145. The GRF-type zinc finger occupies 40–84 (CPHELGPTLLFVKVNQGKEETRRFYACSACRDRKDCNFFQWEDEK). Residues 174–177 (QYLF), R204, D227, 245–246 (NM), and D278 each bind S-adenosyl-L-methionine. A regulatory loop region spans residues 339–360 (QVVDYDNHALYKHGKTGRKQSP). The Zn(2+) site is built by C383, C386, H396, C397, C400, C403, H413, C414, C417, C420, H427, C428, C431, C434, H439, and C441. The 51-residue stretch at 398–448 (EHCNSCTSKDGRKWNHCFLCKKCVKPSWIHCSICNHCALPDHSCKGPKDGC) folds into the DHHC domain. The CCHC-type zinc-finger motif lies at 446-463 (DGCFICGELDHKRSACPN). The span at 472 to 484 (KAVRKQKQRKSNK) shows a compositional bias: basic residues. The segment at 472–516 (KAVRKQKQRKSNKMKMETTKGQSMNHTSATRKKKRRERTHQYLCS) is disordered. The segment covering 490-499 (TKGQSMNHTS) has biased composition (polar residues). Residues 500 to 509 (ATRKKKRRER) show a composition bias toward basic residues.

The protein belongs to the ZCCHC4 family. Interacts with components of the ASC-1 complex TRIP4, ASCC1, ASCC2 and ASCC3. Interact with AHCYL1 and AHCYL2. Interact with YTHDC2.

Its subcellular location is the cytoplasm. It localises to the nucleus. The protein resides in the nucleolus. The enzyme catalyses adenosine(4220) in 28S rRNA + S-adenosyl-L-methionine = N(6)-methyladenosine(4220) in 28S rRNA + S-adenosyl-L-homocysteine + H(+). RRNA N6-methyltransferase that specifically methylates the adenine in position 4220 of 28S rRNA. N6-methylation of adenine(4220) in 28S rRNA is required for translation. The protein is rRNA N(6)-adenosine-methyltransferase ZCCHC4 of Bos taurus (Bovine).